The primary structure comprises 157 residues: 3-dehydroquinate dehydratase (157 aa).

Tyr24 functions as the Proton acceptor in the catalytic mechanism. Residues Asn75, His81, and Asp88 each coordinate substrate. His101 functions as the Proton donor in the catalytic mechanism. Residues 102 to 103 and Arg112 contribute to the substrate site; that span reads LS.

Belongs to the type-II 3-dehydroquinase family. As to quaternary structure, homododecamer.

The enzyme catalyses 3-dehydroquinate = 3-dehydroshikimate + H2O. Its pathway is metabolic intermediate biosynthesis; chorismate biosynthesis; chorismate from D-erythrose 4-phosphate and phosphoenolpyruvate: step 3/7. In terms of biological role, catalyzes a trans-dehydration via an enolate intermediate. In Brucella abortus (strain S19), this protein is 3-dehydroquinate dehydratase.